We begin with the raw amino-acid sequence, 279 residues long: Large ribosomal subunit protein uL2 (279 aa).

Disordered stretches follow at residues 34 to 58 (LRPL…GGGH) and 225 to 279 (VMNP…KNKR). Positions 251–268 (GKPEGRTRRPNKESDKLI) are enriched in basic and acidic residues. The segment covering 269–279 (VRRRRTGKNKR) has biased composition (basic residues).

It belongs to the universal ribosomal protein uL2 family. As to quaternary structure, part of the 50S ribosomal subunit. Forms a bridge to the 30S subunit in the 70S ribosome.

Functionally, one of the primary rRNA binding proteins. Required for association of the 30S and 50S subunits to form the 70S ribosome, for tRNA binding and peptide bond formation. It has been suggested to have peptidyltransferase activity; this is somewhat controversial. Makes several contacts with the 16S rRNA in the 70S ribosome. This chain is Large ribosomal subunit protein uL2, found in Micrococcus luteus (strain ATCC 4698 / DSM 20030 / JCM 1464 / CCM 169 / CCUG 5858 / IAM 1056 / NBRC 3333 / NCIMB 9278 / NCTC 2665 / VKM Ac-2230) (Micrococcus lysodeikticus).